Consider the following 489-residue polypeptide: MTETGLILMWFPLIILGLFVLKWVLKRVNVWIYVSKLGEKKHYLPPGDLGWPVIGNMWSFLRAFKTSDPESFIQSYITRYGRTGIYKAHMFGYPCVLVTTPETCRRVLTDDDAFHIGWPKSTMKLIGRKSFVGISFEEHKRLRRLTSAPVNGPEALSVYIQFIEETVNTDLEKWSKMGEIEFLSHLRKLTFKVIMYIFLSSESEHVMDSLEREYTNLNYGVRAMGINLPGFAYHRALKARKKLVAAFQSIVTNRRNQRKQNISSNRKDMLDNLIDVKDENGRVLDDEEIIDLLLMYLNAGHESSGHLTMWATILMQEHPMILQKAKEEQERIVKKRAPGQKLTLKETREMVYLSQVIDETLRVITFSLTAFREAKSDVQMDGYIIPKGWKVLTWFRNVHLDPEIYPDPKKFDPSRWEGYTPKAGTFLPFGLGSHLCPGNDLAKLEISIFLHHFLLKYRVERSNPGCPVMFLPHNRPKDNCLARITRTMP.

The chain crosses the membrane as a helical span at residues 5–25 (GLILMWFPLIILGLFVLKWVL). C436 provides a ligand contact to heme.

It belongs to the cytochrome P450 family. Heme is required as a cofactor. In terms of tissue distribution, widely expressed. Highly expressed in influorescence stem, influorescence, and silique tissue. Weakly expressed in cauline and rosette leaves. Expressed at a weaker level in stem and influorescence than AtKAO1/CYP88A3.

The protein resides in the endoplasmic reticulum membrane. It carries out the reaction ent-kaur-16-en-19-oate + 3 reduced [NADPH--hemoprotein reductase] + 3 O2 = gibberellin A12 + 3 oxidized [NADPH--hemoprotein reductase] + 4 H2O + 4 H(+). The catalysed reaction is ent-kaur-16-en-19-oate + reduced [NADPH--hemoprotein reductase] + O2 = ent-7alpha-hydroxykaur-16-en-19-oate + oxidized [NADPH--hemoprotein reductase] + H2O + H(+). It catalyses the reaction ent-7alpha-hydroxykaur-16-en-19-oate + reduced [NADPH--hemoprotein reductase] + O2 = gibberellin A12 aldehyde + oxidized [NADPH--hemoprotein reductase] + 2 H2O + H(+). The enzyme catalyses gibberellin A12 aldehyde + reduced [NADPH--hemoprotein reductase] + O2 = gibberellin A12 + oxidized [NADPH--hemoprotein reductase] + H2O + 2 H(+). The protein operates within plant hormone biosynthesis; gibberellin biosynthesis. Catalyzes three successive oxidations of ent-kaurenoic acid giving gibberellin 12 (GA12), a key step in gibberellins (GAs) biosynthesis. GAs, which are involved many processes, including stem elongation, play a central role in plant development. The sequence is that of Ent-kaurenoic acid oxidase 2 from Arabidopsis thaliana (Mouse-ear cress).